The primary structure comprises 602 residues: SAGA complex subunit SPT8 (602 aa).

Positions M1–A141 are disordered. 2 stretches are compositionally biased toward acidic residues: residues V14 to M23 and E36 to D75. Phosphothreonine is present on T85. Phosphoserine is present on residues S108, S123, and S131. WD repeat units follow at residues P173–L212 and G305–K346. Positions V366–I418 are disordered. The span at N378–K395 shows a compositional bias: acidic residues. WD repeat units lie at residues K415–L454, S506–N544, and H560–D600. S451 carries the post-translational modification Phosphoserine.

It belongs to the WD repeat SPT8 family. In terms of assembly, component of the 1.8 MDa SAGA (Spt-Ada-Gcn5 acetyltransferase) complex, which is composed of 19 subunits TRA1, SPT7, TAF5, NGG1/ADA3, SGF73, SPT20/ADA5, SPT8, TAF12, TAF6, HFI1/ADA1, UBP8, GCN5, ADA2, SPT3, SGF29, TAF10, TAF9, SGF11 and SUS1. The SAGA complex is composed of 4 modules, namely the HAT (histone acetyltransferase) module (GCN5, ADA2, NGG1/ADA3 and SGF29), the DUB (deubiquitinating) module (UBP8, SGF11, SGF73 and SUS1), the core or TAF (TBP-associated factor) module (TAF5, TAF6, TAF9, TAF10 and TAF12), and the Tra1 or SPT (Suppressor of Ty) module (TRA1, HFI1/ADA1, SPT3, SPT7, SPT8 and SPT20/ADA5). The Tra1/SPT module binds activators, the core module recruits TBP (TATA-binding protein), the HAT module contains the histone H3 acetyltransferase GCN5, and the DUB module comprises the histone H2B deubiquitinase UBP8.

It is found in the nucleus. Component of the transcription coactivator SAGA complex. SAGA acts as a general cofactor required for essentially all RNA polymerase II transcription. At the promoters, SAGA is required for transcription pre-initiation complex (PIC) recruitment. It influences RNA polymerase II transcriptional activity through different activities such as TBP interaction (via core/TAF module) and promoter selectivity, interaction with transcription activators (via Tra1/SPT module), and chromatin modification through histone acetylation (via HAT module) and deubiquitination (via DUB module). SAGA preferentially acetylates histones H3 (to form H3K9ac, H3K14ac, H3K18ac and H3K23ac) and H2B and deubiquitinates histone H2B. SAGA interacts with DNA via upstream activating sequences (UASs). During SAGA-mediated transcriptional inhibition, SPT3 and SPT8 prevent binding of TBP to the TATA box. The polypeptide is SAGA complex subunit SPT8 (SPT8) (Saccharomyces cerevisiae (strain ATCC 204508 / S288c) (Baker's yeast)).